Reading from the N-terminus, the 491-residue chain is PE-PGRS family protein PE_PGRS26 (491 aa).

Positions 1-93 (MSNVMVVPGM…VGSYAAAEAA (93 aa)) constitute a PE domain. Gly residues-rich tracts occupy residues 207 to 221 (NGGTGASGADGGGGL) and 229 to 238 (GGNGGGGDAG). Disordered regions lie at residues 207–238 (NGGTGASGADGGGGLPPVPASPGGNGGGGDAG), 255–275 (DGGAGGAGDSPNSGANGARGG), and 444–491 (AGGN…GKHG). The span at 444–485 (AGGNGGDGGPSQGGGNPGFGGDGGTGGPGGVGVPDGIGGANG) shows a compositional bias: gly residues.

It belongs to the mycobacterial PE family. PGRS subfamily.

It localises to the cell surface. This chain is PE-PGRS family protein PE_PGRS26, found in Mycobacterium tuberculosis (strain ATCC 25618 / H37Rv).